A 401-amino-acid chain; its full sequence is 8-amino-7-oxononanoate synthase (401 aa).

Arg-24 lines the substrate pocket. 111–112 (GF) is a binding site for pyridoxal 5'-phosphate. Substrate is bound at residue His-137. Residues Ser-183, His-211, and Thr-240 each contribute to the pyridoxal 5'-phosphate site. N6-(pyridoxal phosphate)lysine is present on Lys-243. Residue Thr-357 coordinates substrate.

The protein belongs to the class-II pyridoxal-phosphate-dependent aminotransferase family. BioF subfamily. In terms of assembly, homodimer. It depends on pyridoxal 5'-phosphate as a cofactor.

The enzyme catalyses 6-carboxyhexanoyl-[ACP] + L-alanine + H(+) = (8S)-8-amino-7-oxononanoate + holo-[ACP] + CO2. It participates in cofactor biosynthesis; biotin biosynthesis. Functionally, catalyzes the decarboxylative condensation of pimeloyl-[acyl-carrier protein] and L-alanine to produce 8-amino-7-oxononanoate (AON), [acyl-carrier protein], and carbon dioxide. This chain is 8-amino-7-oxononanoate synthase, found in Xanthomonas axonopodis pv. citri (strain 306).